A 181-amino-acid polypeptide reads, in one-letter code: Adenine phosphoribosyltransferase (181 aa).

This sequence belongs to the purine/pyrimidine phosphoribosyltransferase family. Homodimer.

The protein resides in the cytoplasm. It carries out the reaction AMP + diphosphate = 5-phospho-alpha-D-ribose 1-diphosphate + adenine. Its pathway is purine metabolism; AMP biosynthesis via salvage pathway; AMP from adenine: step 1/1. Its function is as follows. Catalyzes a salvage reaction resulting in the formation of AMP, that is energically less costly than de novo synthesis. The sequence is that of Adenine phosphoribosyltransferase from Methylorubrum extorquens (strain CM4 / NCIMB 13688) (Methylobacterium extorquens).